The following is a 387-amino-acid chain: GTPase Obg (387 aa).

The 159-residue stretch at 1 to 159 (MKFVDEVEIR…RSLKLELLLL (159 aa)) folds into the Obg domain. The 174-residue stretch at 160-333 (ADVGLLGLPN…LTQKVMTFIE (174 aa)) folds into the OBG-type G domain. GTP is bound by residues 166–173 (GLPNAGKS), 191–195 (FTTLV), 213–216 (DIPG), 283–286 (NKLD), and 314–316 (SAF). Residues serine 173 and threonine 193 each coordinate Mg(2+). Residues 361-387 (AAHSQDDDLDDDDWDEDDYDVEVEYRQ) form a disordered region. Residues 367-387 (DDLDDDDWDEDDYDVEVEYRQ) are compositionally biased toward acidic residues.

Belongs to the TRAFAC class OBG-HflX-like GTPase superfamily. OBG GTPase family. As to quaternary structure, monomer. Requires Mg(2+) as cofactor.

The protein localises to the cytoplasm. Functionally, an essential GTPase which binds GTP, GDP and possibly (p)ppGpp with moderate affinity, with high nucleotide exchange rates and a fairly low GTP hydrolysis rate. Plays a role in control of the cell cycle, stress response, ribosome biogenesis and in those bacteria that undergo differentiation, in morphogenesis control. The sequence is that of GTPase Obg from Colwellia psychrerythraea (strain 34H / ATCC BAA-681) (Vibrio psychroerythus).